The primary structure comprises 196 residues: Ribosome maturation factor RimP (196 aa).

The tract at residues 164–196 (LAPQKPNKPGPKKPGHEKKKPSNESAAGKPRAE) is disordered. Residues 173–182 (GPKKPGHEKK) are compositionally biased toward basic residues.

It belongs to the RimP family.

The protein resides in the cytoplasm. Required for maturation of 30S ribosomal subunits. This is Ribosome maturation factor RimP from Xanthomonas axonopodis pv. citri (strain 306).